We begin with the raw amino-acid sequence, 536 residues long: REST corepressor 2 (536 aa).

The segment at 1-44 (MERSGSGVLSRSRAKTVTNGNSQHSEEESSDEEHPNDSMIRVGG) is disordered. Residues 24 to 36 (HSEEESSDEEHPN) are compositionally biased toward basic and acidic residues. An ELM2 domain is found at 38–123 (SMIRVGGDYQ…KSLADLANFT (86 aa)). The 52-residue stretch at 124 to 175 (PFPDEWTVEDKVLFEQAFSFHGKSFHRIQQMLPDKMITSLVKYYYSWKKTRT) folds into the SANT 1 domain. The interval 179-264 (VMDRQARKLL…RARRRPPKGM (86 aa)) is disordered. The segment covering 197-211 (NDEIEEGDPGSDSDF) has biased composition (acidic residues). Basic residues predominate over residues 249 to 262 (YRHHPLRARRRPPK). A coiled-coil region spans residues 283–315 (VTIRQLDTQLVSLKRQVQKIKQTNSVLRNNLGD). The region spanning 328–379 (KINSRWTTEEQLLAVQAVRRYGKDFAAIADVIGNKTVAQVSSFFVSYRRRFN) is the SANT 2 domain. The interval 389–536 (AEQEVQGSSG…GLKVESPQSH (148 aa)) is disordered. The span at 391-406 (QEVQGSSGRTVNTELN) shows a compositional bias: polar residues. Over residues 422–449 (SPPHSDSPLPSSEGSASGNHSSAQSSPP) the composition is skewed to low complexity. Over residues 450-476 (LTQPPPLLRPAPPSAPPSLLRQPPPLQ) the composition is skewed to pro residues.

Belongs to the CoREST family.

Its subcellular location is the nucleus. May act as a component of a corepressor complex that represses transcription. This is REST corepressor 2 (rcor2) from Danio rerio (Zebrafish).